The primary structure comprises 378 residues: P2X receptor A (378 aa).

Over 1–27 (MGFSFDWDDIFQYSTVKIVRIRDRRLG) the chain is Cytoplasmic. The chain crosses the membrane as a helical span at residues 28-48 (ILHLSFLVGIVAYIVVYSAII). At 49 to 307 (KKGYLFTEVP…IQTGTIGSFH (259 aa)) the chain is on the lumenal side. A pore-forming motif region spans residues 290–303 (RHGIRVIFIQTGTI). A helical transmembrane segment spans residues 308–328 (FQTLLLTLVSGLGLLAVATTV). Residues 329–378 (VDQLAIRLLPQRKSYSSLKFQVTESMSNPMKKRITTDEGEDVLYTRIEGL) are Cytoplasmic-facing.

Belongs to the P2X receptor family.

It is found in the contractile vacuole membrane. P2X receptors are ATP-gated ion channels that play a role in intracellular calcium signaling. Not required for the purinergic response to extracellular nucleotides. Inward currents evoked by intracellular ATP and ATP analogs. Exclusively selective for ATP over other nucleotides. Insensitive to P2 receptor antagonists PPADS, suramin and 2',3'-O-(2,4,6-trinitrophenyl)-ATP but inhibited by nanomolar concentrations of copper and sodium ion. More permeable to ammonium than either sodium or potassium ions and less permeable to choline. It has been reported that p2xA is not essential for osmoregulation, however this information is in contradiction with another source which indicates that p2xA is required for osmoregulation. Found to be permeable to chloride ions. Inhibited by copper and sodium ions. The chain is P2X receptor A (p2xA) from Dictyostelium discoideum (Social amoeba).